We begin with the raw amino-acid sequence, 213 residues long: ER lumen protein-retaining receptor erd-2.1 (213 aa).

The Lumenal portion of the chain corresponds to 1–2; it reads MN. A helical transmembrane segment spans residues 3-21; the sequence is LFRFTADVAHAIAIVVLLL. At 22–35 the chain is on the cytoplasmic side; the sequence is KIWKSRSCEGISGR. The chain crosses the membrane as a helical span at residues 36-53; it reads SQLLFALVFVTRYLDLFT. The Lumenal portion of the chain corresponds to 54-61; sequence NFFSFYNT. Residues 62–80 traverse the membrane as a helical segment; it reads AMKIFYLVASFGTVYLMWA. The Cytoplasmic segment spans residues 81-96; that stretch reads KFKATYDRNNDSFRIE. A helical membrane pass occupies residues 97 to 110; it reads FLVIPSMILALLIN. The Lumenal portion of the chain corresponds to 111 to 117; it reads HEFIFME. The helical transmembrane segment at 118–137 threads the bilayer; sequence VMWTFSIYLEAVAIMPQLFM. Residues 138–149 are Cytoplasmic-facing; that stretch reads LSRTGNAETITA. The helical transmembrane segment at 150-168 threads the bilayer; that stretch reads HYLFALGSYRFLYILNWVY. Over 169 to 178 the chain is Lumenal; the sequence is RYYTESFFDP. Residues 179-199 form a helical membrane-spanning segment; that stretch reads ISVVAGIVQTVLYADFFYLYI. The Cytoplasmic segment spans residues 200–213; that stretch reads TRVIQSNRQFEMSA.

The protein belongs to the ERD2 family.

It localises to the endoplasmic reticulum membrane. In terms of biological role, required for the retention of luminal endoplasmic reticulum proteins. Determines the specificity of the luminal ER protein retention system. Also required for normal vesicular traffic through the Golgi. In Caenorhabditis elegans, this protein is ER lumen protein-retaining receptor erd-2.1.